Consider the following 847-residue polypeptide: Signal transducer and activator of transcription 6 (847 aa).

Serine 2 bears the N-acetylserine mark. The region spanning 517–632 (WFDGVLDLTK…EAFRSHYKPE (116 aa)) is the SH2 domain. Phosphotyrosine; by JAK is present on tyrosine 641. The LXXLL motif signature appears at 802–806 (LTKLL). The segment at 809–847 (GQGESGGGSLGAQPLLQPSHYGQSGISMSHMDLRANPSW) is disordered.

It belongs to the transcription factor STAT family. In terms of assembly, forms a homodimer or a heterodimer with a related family member. Interacts with NCOA1 via its C-terminal LXXLL motif. Tyrosine phosphorylated on Tyr-641 following stimulation by IL4/interleukin-4. Tyrosine phosphorylated following stimulation by IL3/interleukin-3. Dephosphorylation on tyrosine residues by PTPN2 negatively regulates the IL4/interleukin-4 mediated signaling. In terms of processing, mono-ADP-ribosylated by PARP14.

It is found in the cytoplasm. It localises to the nucleus. Functionally, carries out a dual function: signal transduction and activation of transcription. Involved in IL4/interleukin-4- and IL3/interleukin-3-mediated signaling. In Homo sapiens (Human), this protein is Signal transducer and activator of transcription 6 (STAT6).